Consider the following 315-residue polypeptide: Ribonuclease HII (315 aa).

The region spanning 78–267 is the RNase H type-2 domain; it reads TLVAGVDEAG…VREALGLAPL (190 aa). Asp-84, Glu-85, and Asp-176 together coordinate a divalent metal cation. A disordered region spans residues 273–292; that stretch reads APPPESAAEPGGEGAIAGIA. Residues 278–292 are compositionally biased toward low complexity; it reads SAAEPGGEGAIAGIA.

It belongs to the RNase HII family. The cofactor is Mn(2+). Requires Mg(2+) as cofactor.

It localises to the cytoplasm. The catalysed reaction is Endonucleolytic cleavage to 5'-phosphomonoester.. In terms of biological role, endonuclease that specifically degrades the RNA of RNA-DNA hybrids. The polypeptide is Ribonuclease HII (Anaeromyxobacter sp. (strain Fw109-5)).